Here is a 243-residue protein sequence, read N- to C-terminus: MHSPPYLLSPAPNTPFPPAEYALREPNGLLAIGGDLTPQRLLAAYRNGIFPWFTEGQPPLWWSPDPRTVFRSDSIHLSRRFRRNLRTSTWTVRADTMFAAVIDACASTPRRGQDGTWITANMREAYLTLHQHSYAHSVEVFDGTMLVGGIYGVALGRMFFGESMFSTRNGASKIALASLAHFLHTHSAPLIDAQVENQHLLNLGAERWPRKDFLAYVRRLITQTDLPACWSVLFGEQLSRELV.

This sequence belongs to the L/F-transferase family.

The protein localises to the cytoplasm. It catalyses the reaction N-terminal L-lysyl-[protein] + L-leucyl-tRNA(Leu) = N-terminal L-leucyl-L-lysyl-[protein] + tRNA(Leu) + H(+). It carries out the reaction N-terminal L-arginyl-[protein] + L-leucyl-tRNA(Leu) = N-terminal L-leucyl-L-arginyl-[protein] + tRNA(Leu) + H(+). The catalysed reaction is L-phenylalanyl-tRNA(Phe) + an N-terminal L-alpha-aminoacyl-[protein] = an N-terminal L-phenylalanyl-L-alpha-aminoacyl-[protein] + tRNA(Phe). Its function is as follows. Functions in the N-end rule pathway of protein degradation where it conjugates Leu, Phe and, less efficiently, Met from aminoacyl-tRNAs to the N-termini of proteins containing an N-terminal arginine or lysine. The sequence is that of Leucyl/phenylalanyl-tRNA--protein transferase from Xylella fastidiosa (strain 9a5c).